The following is a 332-amino-acid chain: 6-phosphogluconolactonase (332 aa).

This sequence belongs to the cycloisomerase 2 family.

The enzyme catalyses 6-phospho-D-glucono-1,5-lactone + H2O = 6-phospho-D-gluconate + H(+). It functions in the pathway carbohydrate degradation; pentose phosphate pathway; D-ribulose 5-phosphate from D-glucose 6-phosphate (oxidative stage): step 2/3. Its function is as follows. Catalyzes the hydrolysis of 6-phosphogluconolactone to 6-phosphogluconate. This is 6-phosphogluconolactonase from Pectobacterium carotovorum subsp. carotovorum (strain PC1).